The following is a 301-amino-acid chain: Probable alpha-L-glutamate ligase 1 (301 aa).

The 184-residue stretch at 104 to 287 (MQLMSRRGIG…VAGAIIAFIE (184 aa)) folds into the ATP-grasp domain. ATP is bound by residues lysine 141, 178-179 (EY), aspartate 187, and 211-213 (RSN). Residues aspartate 248, glutamate 260, and asparagine 262 each contribute to the Mg(2+) site. Residues aspartate 248, glutamate 260, and asparagine 262 each coordinate Mn(2+).

It belongs to the RimK family. Mg(2+) serves as cofactor. It depends on Mn(2+) as a cofactor.

The sequence is that of Probable alpha-L-glutamate ligase 1 from Shewanella amazonensis (strain ATCC BAA-1098 / SB2B).